The primary structure comprises 344 residues: Lipase chaperone (344 aa).

A helical transmembrane segment spans residues 14-34 (AVVYGAVGLAAIAGVAMWSGA). The segment at 37–78 (HGGTGASGEPPDASAARGPAAAPPQAAVPASTSLPPSLAGSS) is disordered. Positions 43–78 (SGEPPDASAARGPAAAPPQAAVPASTSLPPSLAGSS) are enriched in low complexity.

The protein belongs to the lipase chaperone family.

It localises to the cell inner membrane. Its function is as follows. May be involved in the folding of the extracellular lipase during its passage through the periplasm. In Burkholderia cepacia (Pseudomonas cepacia), this protein is Lipase chaperone (lifO).